The primary structure comprises 139 residues: Endoribonuclease YbeY (139 aa).

Zn(2+) is bound by residues H107, H111, and D117.

This sequence belongs to the endoribonuclease YbeY family. Zn(2+) is required as a cofactor.

It is found in the cytoplasm. In terms of biological role, single strand-specific metallo-endoribonuclease involved in late-stage 70S ribosome quality control and in maturation of the 3' terminus of the 16S rRNA. The sequence is that of Endoribonuclease YbeY from Azobacteroides pseudotrichonymphae genomovar. CFP2.